Reading from the N-terminus, the 85-residue chain is ATP synthase subunit c (85 aa).

2 consecutive transmembrane segments (helical) span residues 10 to 30 and 65 to 85; these read GLAL…GAIG and AVAE…LLVV.

It belongs to the ATPase C chain family. In terms of assembly, F-type ATPases have 2 components, F(1) - the catalytic core - and F(0) - the membrane proton channel. F(1) has five subunits: alpha(3), beta(3), gamma(1), delta(1), epsilon(1). F(0) has three main subunits: a(1), b(2) and c(10-14). The alpha and beta chains form an alternating ring which encloses part of the gamma chain. F(1) is attached to F(0) by a central stalk formed by the gamma and epsilon chains, while a peripheral stalk is formed by the delta and b chains.

It localises to the cell inner membrane. Its function is as follows. F(1)F(0) ATP synthase produces ATP from ADP in the presence of a proton or sodium gradient. F-type ATPases consist of two structural domains, F(1) containing the extramembraneous catalytic core and F(0) containing the membrane proton channel, linked together by a central stalk and a peripheral stalk. During catalysis, ATP synthesis in the catalytic domain of F(1) is coupled via a rotary mechanism of the central stalk subunits to proton translocation. In terms of biological role, key component of the F(0) channel; it plays a direct role in translocation across the membrane. A homomeric c-ring of between 10-14 subunits forms the central stalk rotor element with the F(1) delta and epsilon subunits. The polypeptide is ATP synthase subunit c (Thermotoga maritima (strain ATCC 43589 / DSM 3109 / JCM 10099 / NBRC 100826 / MSB8)).